We begin with the raw amino-acid sequence, 229 residues long: Rhamnosyl O-methyltransferase (229 aa).

The signal sequence occupies residues 1–23 (MERVRQMFSCVSGMIYRPTDSIA).

The protein belongs to the rhamnosyl O-methyltransferase family.

In terms of biological role, catalyzes the O-methylation of the hydroxyl group located on C-2 of the first rhamnosyl residue linked to the phenolic group of glycosylated phenolphthiocerol dimycocerosates (PGL) and p-hydroxybenzoic acid derivatives (p-HBAD). This is Rhamnosyl O-methyltransferase from Mycobacterium leprae (strain TN).